Consider the following 248-residue polypeptide: 2,3-bisphosphoglycerate-dependent phosphoglycerate mutase (248 aa).

Substrate-binding positions include 10-17 (RHGQSEWN), 23-24 (TG), Arg62, 89-92 (ERHY), Lys100, 116-117 (RR), and 183-184 (GN). The active-site Tele-phosphohistidine intermediate is His11. Glu89 (proton donor/acceptor) is an active-site residue.

This sequence belongs to the phosphoglycerate mutase family. BPG-dependent PGAM subfamily.

It carries out the reaction (2R)-2-phosphoglycerate = (2R)-3-phosphoglycerate. It functions in the pathway carbohydrate degradation; glycolysis; pyruvate from D-glyceraldehyde 3-phosphate: step 3/5. Its function is as follows. Catalyzes the interconversion of 2-phosphoglycerate and 3-phosphoglycerate. This chain is 2,3-bisphosphoglycerate-dependent phosphoglycerate mutase, found in Corynebacterium diphtheriae (strain ATCC 700971 / NCTC 13129 / Biotype gravis).